We begin with the raw amino-acid sequence, 514 residues long: L-threonine dehydratase biosynthetic IlvA (514 aa).

The residue at position 62 (Lys-62) is an N6-(pyridoxal phosphate)lysine. Pyridoxal 5'-phosphate is bound by residues Asn-89, 188–192 (GGGGL), and Ser-315. 2 ACT-like domains span residues 339-411 (ALLA…DLSD) and 434-504 (RLYS…DETN).

Belongs to the serine/threonine dehydratase family. Homotetramer. Pyridoxal 5'-phosphate is required as a cofactor.

The enzyme catalyses L-threonine = 2-oxobutanoate + NH4(+). It functions in the pathway amino-acid biosynthesis; L-isoleucine biosynthesis; 2-oxobutanoate from L-threonine: step 1/1. Isoleucine allosterically inhibits whereas valine allosterically activates this enzyme. In terms of biological role, catalyzes the anaerobic formation of alpha-ketobutyrate and ammonia from threonine in a two-step reaction. The first step involved a dehydration of threonine and a production of enamine intermediates (aminocrotonate), which tautomerizes to its imine form (iminobutyrate). Both intermediates are unstable and short-lived. The second step is the nonenzymatic hydrolysis of the enamine/imine intermediates to form 2-ketobutyrate and free ammonia. In the low water environment of the cell, the second step is accelerated by RidA. In Escherichia coli (strain K12), this protein is L-threonine dehydratase biosynthetic IlvA (ilvA).